We begin with the raw amino-acid sequence, 266 residues long: Glutamate racemase (266 aa).

Substrate-binding positions include 9–10 (DS) and 41–42 (YG). Cysteine 72 functions as the Proton donor/acceptor in the catalytic mechanism. Substrate is bound at residue 73–74 (NT). Cysteine 183 (proton donor/acceptor) is an active-site residue. Position 184 to 185 (184 to 185 (TH)) interacts with substrate.

The protein belongs to the aspartate/glutamate racemases family.

The catalysed reaction is L-glutamate = D-glutamate. It participates in cell wall biogenesis; peptidoglycan biosynthesis. Its function is as follows. Provides the (R)-glutamate required for cell wall biosynthesis. The chain is Glutamate racemase from Listeria monocytogenes serotype 4b (strain CLIP80459).